Here is a 415-residue protein sequence, read N- to C-terminus: Imidazolonepropionase (415 aa).

Residues His75 and His77 each coordinate Fe(3+). 2 residues coordinate Zn(2+): His75 and His77. Residues Arg84, Tyr147, and His180 each coordinate 4-imidazolone-5-propanoate. Tyr147 contacts N-formimidoyl-L-glutamate. His245 lines the Fe(3+) pocket. Zn(2+) is bound at residue His245. Position 248 (Gln248) interacts with 4-imidazolone-5-propanoate. A Fe(3+)-binding site is contributed by Asp320. A Zn(2+)-binding site is contributed by Asp320. N-formimidoyl-L-glutamate is bound by residues Asn322 and Gly324. A 4-imidazolone-5-propanoate-binding site is contributed by Thr325.

It belongs to the metallo-dependent hydrolases superfamily. HutI family. Requires Zn(2+) as cofactor. Fe(3+) is required as a cofactor.

Its subcellular location is the cytoplasm. It carries out the reaction 4-imidazolone-5-propanoate + H2O = N-formimidoyl-L-glutamate. Its pathway is amino-acid degradation; L-histidine degradation into L-glutamate; N-formimidoyl-L-glutamate from L-histidine: step 3/3. Catalyzes the hydrolytic cleavage of the carbon-nitrogen bond in imidazolone-5-propanoate to yield N-formimidoyl-L-glutamate. It is the third step in the universal histidine degradation pathway. The protein is Imidazolonepropionase of Photorhabdus laumondii subsp. laumondii (strain DSM 15139 / CIP 105565 / TT01) (Photorhabdus luminescens subsp. laumondii).